A 296-amino-acid chain; its full sequence is MFKSGFITIVGRPNVGKSTLTNLLMGEKLSIVSNKPQTTRNNIQTILTGEDYQMIFVDTPGIHKPKHKLGEYMVNSATDSIKDVDLVLFLSNPCEEVGRGDKFIIEQLKNQKAPVIFVLNKVDESSPEKVAKTLELFSKEYDFAEMIPISAMKAKNTDKLLELMVKYLPEGPKYYPDDMITDVQERFVVAEIVREKALKNLSQEVPHGIAVDVIQMKQDDNGKYNIEVDLICEKASHKGIIIGKNGQTLKKIGSTARYELERFLRAKVNIKIWVKVRKEWRDNTSLLKELGYKKLK.

The 168-residue stretch at 3–170 (KSGFITIVGR…LELMVKYLPE (168 aa)) folds into the Era-type G domain. Residues 11 to 18 (GRPNVGKS) are G1. 11-18 (GRPNVGKS) contributes to the GTP binding site. The tract at residues 37 to 41 (QTTRN) is G2. The tract at residues 58-61 (DTPG) is G3. Residues 58–62 (DTPGI) and 120–123 (NKVD) each bind GTP. Positions 120–123 (NKVD) are G4. The segment at 149–151 (ISA) is G5. In terms of domain architecture, KH type-2 spans 201 to 278 (LSQEVPHGIA…NIKIWVKVRK (78 aa)).

This sequence belongs to the TRAFAC class TrmE-Era-EngA-EngB-Septin-like GTPase superfamily. Era GTPase family. In terms of assembly, monomer.

The protein localises to the cytoplasm. The protein resides in the cell membrane. Its function is as follows. An essential GTPase that binds both GDP and GTP, with rapid nucleotide exchange. Plays a role in 16S rRNA processing and 30S ribosomal subunit biogenesis and possibly also in cell cycle regulation and energy metabolism. This Clostridium perfringens (strain ATCC 13124 / DSM 756 / JCM 1290 / NCIMB 6125 / NCTC 8237 / Type A) protein is GTPase Era.